The following is an 849-amino-acid chain: DNA mismatch repair protein MutS (849 aa).

665-672 (GPNMAGKS) contacts ATP.

Belongs to the DNA mismatch repair MutS family.

Its function is as follows. This protein is involved in the repair of mismatches in DNA. It is possible that it carries out the mismatch recognition step. This protein has a weak ATPase activity. The protein is DNA mismatch repair protein MutS of Wolbachia pipientis wMel.